A 394-amino-acid polypeptide reads, in one-letter code: Alpha-2B adrenergic receptor (394 aa).

The helical transmembrane segment at 1–25 (AIAAVITFLILFTIFGNALVILAVL) threads the bilayer. Over 26–36 (TSRSLRAPQNL) the chain is Cytoplasmic. The helical transmembrane segment at 37 to 62 (FLVSLAAADILVATLIIPFSLANELL) threads the bilayer. Topologically, residues 63 to 72 (GYWYFRRTWC) are extracellular. C72 and C151 are joined by a disulfide. A helical transmembrane segment spans residues 73–95 (EVYLALDVLFCTSSIVHLCAISL). At 96–117 (DRYWAVSRALEYNCKRTPRRIK) the chain is on the cytoplasmic side. Residues 118 to 140 (CIILTVWLIAAAISLPPLIYKGD) traverse the membrane as a helical segment. Topologically, residues 141–156 (QGPQPHGAPQCKLNQE) are extracellular. The chain crosses the membrane as a helical span at residues 157-180 (AWYILSSSLGSFFVPCLIMILVYL). Over 181–358 (RIYLIAKRSH…LSREKRFTFV (178 aa)) the chain is Cytoplasmic. A disordered region spans residues 191–318 (RRGPRAKGGP…GSPPLQQPQG (128 aa)). Acidic residues predominate over residues 281-298 (LEEEAEEEEEEEEEEDEP). Positions 299 to 312 (QAVPVSPASVGSPP) are enriched in low complexity. Residues 359 to 382 (LAVVIGVFVLCWFPFFFSYSLSAI) form a helical membrane-spanning segment. The Extracellular segment spans residues 383–391 (CPQQCRVPH). Residues 392–394 (GLF) form a helical membrane-spanning segment.

It belongs to the G-protein coupled receptor 1 family. Adrenergic receptor subfamily. ADRA2B sub-subfamily. Interacts with RAB26. Interacts with PPP1R9B. Interacts with GGA1, GGA2 and GGA3.

The protein localises to the cell membrane. Alpha-2 adrenergic receptors mediate the catecholamine-induced inhibition of adenylate cyclase through the action of G proteins. The protein is Alpha-2B adrenergic receptor (ADRA2B) of Oryctolagus cuniculus (Rabbit).